We begin with the raw amino-acid sequence, 183 residues long: MSHLVIYNEEGSVLELIKEYEAVSKRLAALGVRFERWKADNELSWDAGQKEVIKAYEEDINRIIKEFGFKSLDVVSLIPENPKKDELRNVFLKEHTHSDFEVRFFVDGSGTFYLHIDDKVYVAFCEKGDFISVPAYTKHWFDMGSKPFFKAIRFFLIPEGWVADFTGSDISLKIPSHDDIASL.

Fe(2+) contacts are provided by histidine 95, histidine 97, glutamate 101, and histidine 139. Ni(2+) is bound by residues histidine 95, histidine 97, glutamate 101, and histidine 139.

This sequence belongs to the acireductone dioxygenase (ARD) family. Monomer. Fe(2+) is required as a cofactor. Requires Ni(2+) as cofactor.

The catalysed reaction is 1,2-dihydroxy-5-(methylsulfanyl)pent-1-en-3-one + O2 = 3-(methylsulfanyl)propanoate + CO + formate + 2 H(+). It catalyses the reaction 1,2-dihydroxy-5-(methylsulfanyl)pent-1-en-3-one + O2 = 4-methylsulfanyl-2-oxobutanoate + formate + 2 H(+). Its pathway is amino-acid biosynthesis; L-methionine biosynthesis via salvage pathway; L-methionine from S-methyl-5-thio-alpha-D-ribose 1-phosphate: step 5/6. Functionally, catalyzes 2 different reactions between oxygen and the acireductone 1,2-dihydroxy-3-keto-5-methylthiopentene (DHK-MTPene) depending upon the metal bound in the active site. Fe-containing acireductone dioxygenase (Fe-ARD) produces formate and 2-keto-4-methylthiobutyrate (KMTB), the alpha-ketoacid precursor of methionine in the methionine recycle pathway. Ni-containing acireductone dioxygenase (Ni-ARD) produces methylthiopropionate, carbon monoxide and formate, and does not lie on the methionine recycle pathway. The chain is Acireductone dioxygenase from Hydrogenobaculum sp. (strain Y04AAS1).